Here is a 400-residue protein sequence, read N- to C-terminus: Enoyl-[acyl-carrier-protein] reductase [NADH] 1 (400 aa).

NAD(+) contacts are provided by residues Gly48–Tyr53, Phe74–Glu75, Asp111–Ala112, and Leu139–Ala140. Tyr225 contributes to the substrate binding site. Residue Tyr235 is the Proton donor of the active site. Residues Lys244 and Val273–Thr275 contribute to the NAD(+) site.

Belongs to the TER reductase family. Monomer.

The enzyme catalyses a 2,3-saturated acyl-[ACP] + NAD(+) = a (2E)-enoyl-[ACP] + NADH + H(+). It functions in the pathway lipid metabolism; fatty acid biosynthesis. Involved in the final reduction of the elongation cycle of fatty acid synthesis (FAS II). Catalyzes the reduction of a carbon-carbon double bond in an enoyl moiety that is covalently linked to an acyl carrier protein (ACP). In Photobacterium profundum (strain SS9), this protein is Enoyl-[acyl-carrier-protein] reductase [NADH] 1.